Reading from the N-terminus, the 174-residue chain is Transcription antitermination protein NusB (174 aa).

Belongs to the NusB family.

Its function is as follows. Involved in transcription antitermination. Required for transcription of ribosomal RNA (rRNA) genes. Binds specifically to the boxA antiterminator sequence of the ribosomal RNA (rrn) operons. The chain is Transcription antitermination protein NusB from Rhodopseudomonas palustris (strain TIE-1).